The following is a 505-amino-acid chain: Amidophosphoribosyltransferase (505 aa).

The active-site Nucleophile is the cysteine 2. The 234-residue stretch at 2-235 folds into the Glutamine amidotransferase type-2 domain; sequence CGIVGIVSQS…AGEAVYVTFD (234 aa). Positions 306, 368, and 369 each coordinate Mg(2+). A disordered region spans residues 484–505; it reads RNDNAKKKREKQASNLEIYNEQ. Over residues 496-505 the composition is skewed to polar residues; it reads ASNLEIYNEQ.

In the C-terminal section; belongs to the purine/pyrimidine phosphoribosyltransferase family. Requires Mg(2+) as cofactor.

The catalysed reaction is 5-phospho-beta-D-ribosylamine + L-glutamate + diphosphate = 5-phospho-alpha-D-ribose 1-diphosphate + L-glutamine + H2O. It functions in the pathway purine metabolism; IMP biosynthesis via de novo pathway; N(1)-(5-phospho-D-ribosyl)glycinamide from 5-phospho-alpha-D-ribose 1-diphosphate: step 1/2. In terms of biological role, catalyzes the formation of phosphoribosylamine from phosphoribosylpyrophosphate (PRPP) and glutamine. The chain is Amidophosphoribosyltransferase from Haemophilus influenzae (strain ATCC 51907 / DSM 11121 / KW20 / Rd).